Here is a 650-residue protein sequence, read N- to C-terminus: 1-deoxy-D-xylulose-5-phosphate synthase 2 (650 aa).

Residues His79 and 120-122 (AHS) contribute to the thiamine diphosphate site. Asp151 is a Mg(2+) binding site. Thiamine diphosphate-binding positions include 152–153 (GS), Asn180, Tyr289, and Glu371. Mg(2+) is bound at residue Asn180.

Belongs to the transketolase family. DXPS subfamily. In terms of assembly, homodimer. The cofactor is Mg(2+). Thiamine diphosphate serves as cofactor.

The enzyme catalyses D-glyceraldehyde 3-phosphate + pyruvate + H(+) = 1-deoxy-D-xylulose 5-phosphate + CO2. It participates in metabolic intermediate biosynthesis; 1-deoxy-D-xylulose 5-phosphate biosynthesis; 1-deoxy-D-xylulose 5-phosphate from D-glyceraldehyde 3-phosphate and pyruvate: step 1/1. Catalyzes the acyloin condensation reaction between C atoms 2 and 3 of pyruvate and glyceraldehyde 3-phosphate to yield 1-deoxy-D-xylulose-5-phosphate (DXP). This chain is 1-deoxy-D-xylulose-5-phosphate synthase 2, found in Zymomonas mobilis subsp. mobilis (strain ATCC 31821 / ZM4 / CP4).